The sequence spans 94 residues: U27-theraphotoxin-Cg1a (94 aa).

A signal peptide spans 1–22; the sequence is MIFLLPPVIFVMLLAESVLILG. The propeptide occupies 23 to 58; the sequence is DSEDADLMEMVQMSRPFFNPIIPAVEFVDLREERQR. Disulfide bonds link C60/C78, C67/C83, and C77/C88.

The protein belongs to the neurotoxin 14 (magi-1) family. OAIP-1 subfamily. Expressed by the venom gland.

It is found in the secreted. Functionally, probable ion channel inhibitor. In Chilobrachys guangxiensis (Chinese earth tiger tarantula), this protein is U27-theraphotoxin-Cg1a.